The following is a 264-amino-acid chain: Small ribosomal subunit protein uS3 (264 aa).

In terms of domain architecture, KH type-2 spans 39–107 (VREYLKKKLK…PVHVNIEEIR (69 aa)). The disordered stretch occupies residues 214–264 (PVETAAPREEERRPRRAPRGDRPDGARNGRPGGGRGRAPRKADAAPAPEGE). Residues 219-240 (APREEERRPRRAPRGDRPDGAR) are compositionally biased toward basic and acidic residues.

This sequence belongs to the universal ribosomal protein uS3 family. As to quaternary structure, part of the 30S ribosomal subunit. Forms a tight complex with proteins S10 and S14.

In terms of biological role, binds the lower part of the 30S subunit head. Binds mRNA in the 70S ribosome, positioning it for translation. This is Small ribosomal subunit protein uS3 from Bordetella avium (strain 197N).